A 179-amino-acid chain; its full sequence is MAKLHDYYKDEVVKKLMTEFNYNSVMQVPRVEKITLNMGVGEAIADKKLLDNAAADLAAISGQKPLITKARKSVAGFKIRQGYPIGCKVTLRGERMWEFLERLISIAVPRIRDFRGLSAKSFDGRGNYSMGVREQIIFPEIDYDKVDRVRGLDITITTTAKSDDEGRALLAAFNFPFRK.

The protein belongs to the universal ribosomal protein uL5 family. Part of the 50S ribosomal subunit; part of the 5S rRNA/L5/L18/L25 subcomplex. Contacts the 5S rRNA and the P site tRNA. Forms a bridge to the 30S subunit in the 70S ribosome.

Functionally, this is one of the proteins that bind and probably mediate the attachment of the 5S RNA into the large ribosomal subunit, where it forms part of the central protuberance. In the 70S ribosome it contacts protein S13 of the 30S subunit (bridge B1b), connecting the 2 subunits; this bridge is implicated in subunit movement. Contacts the P site tRNA; the 5S rRNA and some of its associated proteins might help stabilize positioning of ribosome-bound tRNAs. The protein is Large ribosomal subunit protein uL5 of Pectobacterium carotovorum subsp. carotovorum (strain PC1).